Reading from the N-terminus, the 234-residue chain is Hydrolase in agr operon (234 aa).

A CN hydrolase domain is found at 1 to 212; sequence ILYNKDTDVV…EKELTVTIDI (212 aa). The Proton acceptor role is filled by glutamate 14. Lysine 83 (proton donor) is an active-site residue. The active-site Nucleophile is the cysteine 119.

It belongs to the carbon-nitrogen hydrolase superfamily. NIT1/NIT2 family.

The chain is Hydrolase in agr operon from Staphylococcus lugdunensis.